The following is a 385-amino-acid chain: Initiation-specific alpha-1,6-mannosyltransferase (385 aa).

Over 1–15 (MLQLREPQMVHKHLK) the chain is Cytoplasmic. The chain crosses the membrane as a helical; Signal-anchor for type II membrane protein span at residues 16–36 (LAVLGIVVIFTTYFIISSLSS). At 37–385 (PTSTHKTEYN…KDDGMPEMEQ (349 aa)) the chain is on the lumenal side. The DXD motif signature appears at 189-191 (DID).

This sequence belongs to the glycosyltransferase 32 family. Mn(2+) is required as a cofactor.

Its subcellular location is the endoplasmic reticulum membrane. It is found in the golgi apparatus membrane. The enzyme catalyses Transfers an alpha-D-mannosyl residue from GDP-mannose into lipid-linked oligosaccharide, forming an alpha-(1-&gt;6)-D-mannosyl-D-mannose linkage.. Its function is as follows. Mannosyltransferase involved in outer chain elongation of asparagine-linked oligosaccharides of the type Man(9)GlcNAc(2). Adds the first alpha-1,6-mannose to the Man(8)GlcNAc(2) and Man(9)GlcNAc(2), but not Man(5)GlcNAc(2), endoplasmic reticulum intermediates. Represents the first enzymatic event required for synthesis of outer chain mannose linkages on yeast secretory proteins. N-glycan outer chain epitopes play a crucial role in the host-fungal interaction, virulence, and host immune response such as interleukin synthesis or phagocytosis by neutrophils. The sequence is that of Initiation-specific alpha-1,6-mannosyltransferase from Candida albicans (strain SC5314 / ATCC MYA-2876) (Yeast).